Consider the following 367-residue polypeptide: Peptide chain release factor 2 (367 aa).

Q247 bears the N5-methylglutamine mark.

Belongs to the prokaryotic/mitochondrial release factor family. Methylated by PrmC. Methylation increases the termination efficiency of RF2.

The protein localises to the cytoplasm. Functionally, peptide chain release factor 2 directs the termination of translation in response to the peptide chain termination codons UGA and UAA. This chain is Peptide chain release factor 2, found in Caulobacter sp. (strain K31).